A 121-amino-acid chain; its full sequence is Homeobox protein HD-6 (121 aa).

A DNA-binding region (homeobox) is located at residues Pro28–Tyr87.

Its subcellular location is the nucleus. The chain is Homeobox protein HD-6 (HD-6) from Encephalitozoon cuniculi (strain GB-M1) (Microsporidian parasite).